The following is a 297-amino-acid chain: Phosphatidylglycerol--prolipoprotein diacylglyceryl transferase (297 aa).

Helical transmembrane passes span 17–37 (LAVR…IVVG), 59–79 (MLFY…VLFY), and 97–117 (GGMS…LFAW). An a 1,2-diacyl-sn-glycero-3-phospho-(1'-sn-glycerol)-binding site is contributed by arginine 142. 2 helical membrane-spanning segments follow: residues 230–250 (MGAV…TVEF) and 257–277 (FLGL…PMIV).

The protein belongs to the Lgt family.

Its subcellular location is the cell inner membrane. It catalyses the reaction L-cysteinyl-[prolipoprotein] + a 1,2-diacyl-sn-glycero-3-phospho-(1'-sn-glycerol) = an S-1,2-diacyl-sn-glyceryl-L-cysteinyl-[prolipoprotein] + sn-glycerol 1-phosphate + H(+). Its pathway is protein modification; lipoprotein biosynthesis (diacylglyceryl transfer). Catalyzes the transfer of the diacylglyceryl group from phosphatidylglycerol to the sulfhydryl group of the N-terminal cysteine of a prolipoprotein, the first step in the formation of mature lipoproteins. The chain is Phosphatidylglycerol--prolipoprotein diacylglyceryl transferase from Burkholderia multivorans (strain ATCC 17616 / 249).